The following is a 143-amino-acid chain: Transcriptional regulator MraZ (143 aa).

2 consecutive SpoVT-AbrB domains span residues 5–47 (QYEH…SLEE) and 76–119 (AVEC…SKEV).

The protein belongs to the MraZ family. Forms oligomers.

The protein resides in the cytoplasm. The protein localises to the nucleoid. This Thermoanaerobacter sp. (strain X514) protein is Transcriptional regulator MraZ.